A 495-amino-acid chain; its full sequence is UDP-N-acetylmuramoyl-L-alanyl-D-glutamate--2,6-diaminopimelate ligase (495 aa).

Residue S29 coordinates UDP-N-acetyl-alpha-D-muramoyl-L-alanyl-D-glutamate. 111–117 (GTNGKTS) serves as a coordination point for ATP. Residues 153–154 (TT), S180, Q186, and R188 each bind UDP-N-acetyl-alpha-D-muramoyl-L-alanyl-D-glutamate. The residue at position 220 (K220) is an N6-carboxylysine. Residues R384, 408–411 (DNPR), G459, and E463 each bind meso-2,6-diaminopimelate. Residues 408 to 411 (DNPR) carry the Meso-diaminopimelate recognition motif motif.

It belongs to the MurCDEF family. MurE subfamily. It depends on Mg(2+) as a cofactor. In terms of processing, carboxylation is probably crucial for Mg(2+) binding and, consequently, for the gamma-phosphate positioning of ATP.

The protein localises to the cytoplasm. The catalysed reaction is UDP-N-acetyl-alpha-D-muramoyl-L-alanyl-D-glutamate + meso-2,6-diaminopimelate + ATP = UDP-N-acetyl-alpha-D-muramoyl-L-alanyl-gamma-D-glutamyl-meso-2,6-diaminopimelate + ADP + phosphate + H(+). Its pathway is cell wall biogenesis; peptidoglycan biosynthesis. Its function is as follows. Catalyzes the addition of meso-diaminopimelic acid to the nucleotide precursor UDP-N-acetylmuramoyl-L-alanyl-D-glutamate (UMAG) in the biosynthesis of bacterial cell-wall peptidoglycan. This chain is UDP-N-acetylmuramoyl-L-alanyl-D-glutamate--2,6-diaminopimelate ligase, found in Xylella fastidiosa (strain Temecula1 / ATCC 700964).